A 426-amino-acid chain; its full sequence is Glutamate-1-semialdehyde 2,1-aminomutase (426 aa).

Lys-265 bears the N6-(pyridoxal phosphate)lysine mark.

It belongs to the class-III pyridoxal-phosphate-dependent aminotransferase family. HemL subfamily. As to quaternary structure, homodimer. Requires pyridoxal 5'-phosphate as cofactor.

Its subcellular location is the cytoplasm. It catalyses the reaction (S)-4-amino-5-oxopentanoate = 5-aminolevulinate. It functions in the pathway porphyrin-containing compound metabolism; protoporphyrin-IX biosynthesis; 5-aminolevulinate from L-glutamyl-tRNA(Glu): step 2/2. The chain is Glutamate-1-semialdehyde 2,1-aminomutase from Enterobacter sp. (strain 638).